The following is a 261-amino-acid chain: Oligodendrocyte transcription factor 1 (261 aa).

The interval 41–105 (PPISSSSSTS…LRRKINSRER (65 aa)) is disordered. Positions 44-56 (SSSSSTSSSSTAS) are enriched in low complexity. The bHLH domain occupies 95–154 (QLRRKINSRERKRMQDLNLAMDALREVILPYSAAHCQGAPGRKLSKIATLLLARNYILLL).

Expressed specifically in the brain, including the corpus callosum, hippocampal and cerebral white matter. Also detected in cells scattered in gray matter, most probably in oligodendrocytes.

Its subcellular location is the nucleus. Promotes formation and maturation of oligodendrocytes, especially within the brain. Cooperates with OLIG2 to establish the pMN domain of the embryonic neural tube. The protein is Oligodendrocyte transcription factor 1 (Olig1) of Rattus norvegicus (Rat).